The primary structure comprises 375 residues: Chaperone protein DnaJ (375 aa).

The J domain maps to 4-68; that stretch reads DYYEILGVSR…ETRARYDRFG (65 aa). The segment at 135–217 adopts a CR-type zinc-finger fold; the sequence is GGEKEIRISH…CDGKGANQVT (83 aa). Residues cysteine 148, cysteine 151, cysteine 165, cysteine 168, cysteine 191, cysteine 194, cysteine 205, and cysteine 208 each contribute to the Zn(2+) site. 4 CXXCXGXG motif repeats span residues 148–155, 165–172, 191–198, and 205–212; these read CEVCSGSG, CSTCSGSG, CPTCNGTG, and CDACDGKG.

It belongs to the DnaJ family. In terms of assembly, homodimer. It depends on Zn(2+) as a cofactor.

The protein localises to the cytoplasm. Participates actively in the response to hyperosmotic and heat shock by preventing the aggregation of stress-denatured proteins and by disaggregating proteins, also in an autonomous, DnaK-independent fashion. Unfolded proteins bind initially to DnaJ; upon interaction with the DnaJ-bound protein, DnaK hydrolyzes its bound ATP, resulting in the formation of a stable complex. GrpE releases ADP from DnaK; ATP binding to DnaK triggers the release of the substrate protein, thus completing the reaction cycle. Several rounds of ATP-dependent interactions between DnaJ, DnaK and GrpE are required for fully efficient folding. Also involved, together with DnaK and GrpE, in the DNA replication of plasmids through activation of initiation proteins. This is Chaperone protein DnaJ from Nostoc punctiforme (strain ATCC 29133 / PCC 73102).